The primary structure comprises 305 residues: Glycine--tRNA ligase alpha subunit (305 aa).

This sequence belongs to the class-II aminoacyl-tRNA synthetase family. Tetramer of two alpha and two beta subunits.

The protein localises to the cytoplasm. It carries out the reaction tRNA(Gly) + glycine + ATP = glycyl-tRNA(Gly) + AMP + diphosphate. This is Glycine--tRNA ligase alpha subunit from Streptococcus suis (strain 05ZYH33).